Here is a 294-residue protein sequence, read N- to C-terminus: Uracil-DNA glycosylase (294 aa).

Aspartate 139 (proton acceptor) is an active-site residue.

This sequence belongs to the uracil-DNA glycosylase (UDG) superfamily. UNG family.

Its subcellular location is the host nucleus. The catalysed reaction is Hydrolyzes single-stranded DNA or mismatched double-stranded DNA and polynucleotides, releasing free uracil.. Functionally, excises uracil residues from the DNA which can arise as a result of misincorporation of dUMP residues by DNA polymerase or deamination of cytosines. Therefore may reduce deleterious uracil incorporation into the viral genome, particularly in terminally differentiated cells which lack DNA repair enzymes. This Human herpesvirus 2 (strain 333) (HHV-2) protein is Uracil-DNA glycosylase (UL2).